We begin with the raw amino-acid sequence, 331 residues long: Adenine deaminase (331 aa).

Residues H17, H19, and H197 each contribute to the Zn(2+) site. E200 (proton donor) is an active-site residue. D278 serves as a coordination point for Zn(2+). Residue D279 participates in substrate binding.

The protein belongs to the metallo-dependent hydrolases superfamily. Adenosine and AMP deaminases family. Adenine deaminase type 2 subfamily. Zn(2+) serves as cofactor.

The catalysed reaction is adenine + H2O + H(+) = hypoxanthine + NH4(+). In terms of biological role, catalyzes the hydrolytic deamination of adenine to hypoxanthine. Plays an important role in the purine salvage pathway and in nitrogen catabolism. The sequence is that of Adenine deaminase from Wolinella succinogenes (strain ATCC 29543 / DSM 1740 / CCUG 13145 / JCM 31913 / LMG 7466 / NCTC 11488 / FDC 602W) (Vibrio succinogenes).